The chain runs to 414 residues: Serine hydroxymethyltransferase (414 aa).

Residues Leu-121 and 125–127 contribute to the (6S)-5,6,7,8-tetrahydrofolate site; that span reads GHL. At Lys-229 the chain carries N6-(pyridoxal phosphate)lysine.

It belongs to the SHMT family. In terms of assembly, homodimer. It depends on pyridoxal 5'-phosphate as a cofactor.

It is found in the cytoplasm. The enzyme catalyses (6R)-5,10-methylene-5,6,7,8-tetrahydrofolate + glycine + H2O = (6S)-5,6,7,8-tetrahydrofolate + L-serine. Its pathway is one-carbon metabolism; tetrahydrofolate interconversion. The protein operates within amino-acid biosynthesis; glycine biosynthesis; glycine from L-serine: step 1/1. Its function is as follows. Catalyzes the reversible interconversion of serine and glycine with tetrahydrofolate (THF) serving as the one-carbon carrier. This reaction serves as the major source of one-carbon groups required for the biosynthesis of purines, thymidylate, methionine, and other important biomolecules. Also exhibits THF-independent aldolase activity toward beta-hydroxyamino acids, producing glycine and aldehydes, via a retro-aldol mechanism. This is Serine hydroxymethyltransferase from Variovorax paradoxus (strain S110).